Here is a 348-residue protein sequence, read N- to C-terminus: Dihydroorotase (348 aa).

2 residues coordinate Zn(2+): His-17 and His-19. Substrate is bound by residues 19–21 (HLR) and Asn-45. Positions 103, 140, and 178 each coordinate Zn(2+). An N6-carboxylysine modification is found at Lys-103. A substrate-binding site is contributed by His-140. Leu-223 lines the substrate pocket. Position 251 (Asp-251) interacts with Zn(2+). Residue Asp-251 is part of the active site. His-255 and Ala-267 together coordinate substrate.

Belongs to the metallo-dependent hydrolases superfamily. DHOase family. Class II DHOase subfamily. Homodimer. Zn(2+) is required as a cofactor.

The catalysed reaction is (S)-dihydroorotate + H2O = N-carbamoyl-L-aspartate + H(+). It participates in pyrimidine metabolism; UMP biosynthesis via de novo pathway; (S)-dihydroorotate from bicarbonate: step 3/3. Catalyzes the reversible cyclization of carbamoyl aspartate to dihydroorotate. The polypeptide is Dihydroorotase (Escherichia fergusonii (strain ATCC 35469 / DSM 13698 / CCUG 18766 / IAM 14443 / JCM 21226 / LMG 7866 / NBRC 102419 / NCTC 12128 / CDC 0568-73)).